Here is a 145-residue protein sequence, read N- to C-terminus: uncharacterized protein (145 aa).

2 helical membrane-spanning segments follow: residues 20–40 (LIGP…GMFF) and 116–136 (MIML…VLSA).

The protein resides in the membrane. This is an uncharacterized protein from Saccharomyces cerevisiae (strain ATCC 204508 / S288c) (Baker's yeast).